Here is a 146-residue protein sequence, read N- to C-terminus: Small ribosomal subunit protein uS13 (146 aa).

Residues alanine 119 to arginine 146 are disordered.

The protein belongs to the universal ribosomal protein uS13 family. As to quaternary structure, part of the 30S ribosomal subunit. Forms a loose heterodimer with protein S19. Forms two bridges to the 50S subunit in the 70S ribosome.

Located at the top of the head of the 30S subunit, it contacts several helices of the 16S rRNA. In the 70S ribosome it contacts the 23S rRNA (bridge B1a) and protein L5 of the 50S subunit (bridge B1b), connecting the 2 subunits; these bridges are implicated in subunit movement. This chain is Small ribosomal subunit protein uS13, found in Archaeoglobus fulgidus (strain ATCC 49558 / DSM 4304 / JCM 9628 / NBRC 100126 / VC-16).